The chain runs to 194 residues: Protein A43 (194 aa).

The first 22 residues, 1–22 (MMMMKWIISILTMSIMPVLAYS), serve as a signal peptide directing secretion. Topologically, residues 23-165 (SSIFRFHSED…YKDINDKYND (143 aa)) are extracellular. Residues Asn-65 and Asn-114 are each glycosylated (N-linked (GlcNAc...) asparagine; by host). The helical transmembrane segment at 166-186 (IYDFTAICMLIASTLIVTIYV) threads the bilayer. Residues 187–194 (FKKIKMNS) are Cytoplasmic-facing.

This sequence belongs to the orthopoxvirus OPG172 protein family.

It is found in the host membrane. The protein localises to the host cell surface. In Homo sapiens (Human), this protein is Protein A43 (OPG172).